A 115-amino-acid chain; its full sequence is Large ribosomal subunit protein uL22 (115 aa).

This sequence belongs to the universal ribosomal protein uL22 family. Part of the 50S ribosomal subunit.

This protein binds specifically to 23S rRNA; its binding is stimulated by other ribosomal proteins, e.g. L4, L17, and L20. It is important during the early stages of 50S assembly. It makes multiple contacts with different domains of the 23S rRNA in the assembled 50S subunit and ribosome. Functionally, the globular domain of the protein is located near the polypeptide exit tunnel on the outside of the subunit, while an extended beta-hairpin is found that lines the wall of the exit tunnel in the center of the 70S ribosome. The chain is Large ribosomal subunit protein uL22 from Streptomyces griseus subsp. griseus (strain JCM 4626 / CBS 651.72 / NBRC 13350 / KCC S-0626 / ISP 5235).